Here is a 162-residue protein sequence, read N- to C-terminus: Putative 4-hydroxy-4-methyl-2-oxoglutarate aldolase (162 aa).

Residues 75–78 and R97 contribute to the substrate site; that span reads GDML. Residue D98 participates in a divalent metal cation binding.

This sequence belongs to the class II aldolase/RraA-like family. In terms of assembly, homotrimer. Requires a divalent metal cation as cofactor.

The enzyme catalyses 4-hydroxy-4-methyl-2-oxoglutarate = 2 pyruvate. It catalyses the reaction oxaloacetate + H(+) = pyruvate + CO2. Functionally, catalyzes the aldol cleavage of 4-hydroxy-4-methyl-2-oxoglutarate (HMG) into 2 molecules of pyruvate. Also contains a secondary oxaloacetate (OAA) decarboxylase activity due to the common pyruvate enolate transition state formed following C-C bond cleavage in the retro-aldol and decarboxylation reactions. The chain is Putative 4-hydroxy-4-methyl-2-oxoglutarate aldolase from Pseudomonas aeruginosa (strain LESB58).